A 193-amino-acid polypeptide reads, in one-letter code: DNA damage-inducible transcript 4-like protein (193 aa).

This sequence belongs to the DDIT4 family.

The protein resides in the cytoplasm. Functionally, inhibits cell growth by regulating the TOR signaling pathway upstream of the TSC1-TSC2 complex and downstream of AKT1. This Bos taurus (Bovine) protein is DNA damage-inducible transcript 4-like protein (DDIT4L).